The chain runs to 901 residues: Viral-enhancing factor (901 aa).

Positions 27-330 (HRRTEVGVVL…IFTWLYNPQR (304 aa)) constitute a Peptidase M60 domain. Asn-65, Asn-265, Asn-339, Asn-349, Asn-540, Asn-594, Asn-595, Asn-642, Asn-683, and Asn-698 each carry an N-linked (GlcNAc...) asparagine; by host glycan.

Its function is as follows. Involved in disruption of the peritrophic membrane and fusion of nucleocapsids with midgut cells. In Trichoplusia ni (Cabbage looper), this protein is Viral-enhancing factor (VEF).